The sequence spans 376 residues: Carbohydrate sulfotransferase 14 (376 aa).

The Cytoplasmic portion of the chain corresponds to 1–39 (MFPRPLTPLAAPNGAEPLGRALRRAPLGRARAGLGGPPL). The chain crosses the membrane as a helical; Signal-anchor for type II membrane protein span at residues 40-60 (LLPSMLMFAVIVASSGLLLMI). Over 61 to 376 (ERGILAEMKP…PNVTKEACQQ (316 aa)) the chain is Lumenal. N-linked (GlcNAc...) asparagine glycosylation occurs at Asn110. 3'-phosphoadenylyl sulfate-binding positions include 155–161 (PKVACSN) and 213–221 (REPLERLLS). N-linked (GlcNAc...) asparagine glycosylation is present at Asn368.

The protein belongs to the sulfotransferase 2 family. In terms of tissue distribution, widely expressed. Expressed at high level in pituitary gland, placenta, uterus and thyroid.

The protein resides in the golgi apparatus membrane. It catalyses the reaction dermatan + n 3'-phosphoadenylyl sulfate = dermatan 4'-sulfate + n adenosine 3',5'-bisphosphate + n H(+). Functionally, catalyzes the transfer of sulfate to position 4 of the N-acetylgalactosamine (GalNAc) residue of dermatan sulfate. Plays a pivotal role in the formation of 4-0-sulfated IdoA blocks in dermatan sulfate. Transfers sulfate to the C-4 hydroxyl of beta1,4-linked GalNAc that is substituted with an alpha-linked iduronic acid (IdoUA) at the C-3 hydroxyl. Transfers sulfate more efficiently to GalNAc residues in -IdoUA-GalNAc-IdoUA- than in -GlcUA-GalNAc-GlcUA-sequences. Has preference for partially desulfated dermatan sulfate. Addition of sulfate to GalNAc may occur immediately after epimerization of GlcUA to IdoUA. Appears to have an important role in the formation of the cerebellar neural network during postnatal brain development. This Homo sapiens (Human) protein is Carbohydrate sulfotransferase 14 (CHST14).